Reading from the N-terminus, the 250-residue chain is Thioesterase FPSE_09186 (250 aa).

It belongs to the AMT4 thioesterase family.

It participates in secondary metabolite biosynthesis. Functionally, thioesterase; part of the gene cluster that mediates the biosynthesis of the lipopeptides W493 A and B. W493 A and B consist of six amino acid residues D-allo-thr, L-Ala, D-Ala, L-Gln, D-Tyr, and L-Val/L-Ile linked to a 3-hydroxy-4-methyltetradecanoic acid polyketide chain. The biosynthesis starts with formation of the linear polyketide chain by the highly reducing polyketide synthase PKS40. The gene cluster contains a putative acyl-CoA ligase (FPSE_09184) for formation of a CoA thioester polyketide. The thiol bond could be hydrolyzed by the putative thioesterase (FPSE_09186) and then accepted by the first T domain in module 1 of NRPS32. The second T domain is responsible for accepting a threonine, which is adenylated by the A domain and epimerized to the D-allo-threonine formed by the E domain. The five successive modules incorporate Ala, Ala, Gln, Tyr, and Val/Ile into the final product, which is released by cyclization. In Fusarium pseudograminearum (strain CS3096) (Wheat and barley crown-rot fungus), this protein is Thioesterase FPSE_09186.